Consider the following 131-residue polypeptide: Small ribosomal subunit protein bS6 (131 aa).

Belongs to the bacterial ribosomal protein bS6 family.

In terms of biological role, binds together with bS18 to 16S ribosomal RNA. This is Small ribosomal subunit protein bS6 from Borrelia hermsii (strain HS1 / DAH).